The following is a 360-amino-acid chain: Cyclin-D1-binding protein 1 (360 aa).

An N-acetylalanine modification is found at A2. 2 interaction with TCF3 regions span residues 2 to 184 (ASAT…VDFV) and 150 to 360 (ISYN…ELEL). Interaction with RPLP0 stretches follow at residues 2–190 (ASAT…AHEE) and 240–360 (LIIP…ELEL). The interval 2–208 (ASATAPAAAV…DPYSGLLNDT (207 aa)) is required for interaction with CCND1.

This sequence belongs to the CCNDBP1 family. As to quaternary structure, interacts with CCND1 and GRAP2. May also interact with COPS5, RPLP0, SIRT6, SYF2 and TCF3. Post-translationally, phosphorylated. Ubiquitously expressed. Expression is down-regulated in a variety of tumor types including breast, colon, prostate and rectal tumors, and is up-regulated in certain hepatic carcinomas.

Its subcellular location is the cytoplasm. The protein localises to the nucleus. Functionally, may negatively regulate cell cycle progression. May act at least in part via inhibition of the cyclin-D1/CDK4 complex, thereby preventing phosphorylation of RB1 and blocking E2F-dependent transcription. The sequence is that of Cyclin-D1-binding protein 1 (CCNDBP1) from Homo sapiens (Human).